Consider the following 4349-residue polypeptide: Dynein heavy chain, cytoplasmic (4349 aa).

Positions 1–1907 are stem; that stretch reads MEVTSAAAPS…YIKMANAKLN (1907 aa). 6 coiled-coil regions span residues 459 to 480, 1178 to 1215, 1266 to 1293, 1334 to 1354, 1560 to 1577, and 1640 to 1670; these read WEEN…RNEK, LMKF…STAQ, SQWE…QAKI, ESRI…KEAL, YKEF…LNRV, and NIPN…EKER. AAA regions lie at residues 1908–2133, 2201–2459, 2565–2814, and 2908–3177; these read YGFE…VLVS, NAIR…FTTA, EVNT…WVRG, and TFCE…QGKV. Residue 1946–1953 participates in ATP binding; it reads GPAGTGKT. Residues 2194–2217 are a coiled coil; the sequence is ANLEALENAIRELAAERHLVVNEL. ATP-binding positions include 2239 to 2246, 2604 to 2611, and 2946 to 2953; these read GNSGSGKS, GPPGSGKT, and GVSGSGKT. Coiled-coil stretches lie at residues 3186–3294, 3420–3477, and 3774–3807; these read LDFV…LAKA, GPLK…EMSR, and DNVI…VEEI. The interval 3186–3477 is stalk; the sequence is LDFVTQYIKL…TQAIKAEMSR (292 aa). AAA stretches follow at residues 3563-3792 and 4001-4213; these read LSTA…EISA and AERF…IVDT.

This sequence belongs to the dynein heavy chain family. As to quaternary structure, consists of at least two heavy chains and a number of intermediate and light chains.

The protein resides in the cytoplasm. It is found in the cytoskeleton. Cytoplasmic dynein acts as a motor for the intracellular retrograde motility of vesicles and organelles along microtubules. Dynein has ATPase activity; the force-producing power stroke is thought to occur on release of ADP. This chain is Dynein heavy chain, cytoplasmic (DHC1), found in Fusarium vanettenii (Neocosmospora pisi).